The primary structure comprises 306 residues: D-aminoacyl-tRNA deacylase (306 aa).

This sequence belongs to the DtdA deacylase family. In terms of assembly, monomer. Zn(2+) is required as a cofactor.

The enzyme catalyses a D-aminoacyl-tRNA + H2O = a tRNA + a D-alpha-amino acid + H(+). The catalysed reaction is glycyl-tRNA(Ala) + H2O = tRNA(Ala) + glycine + H(+). D-aminoacyl-tRNA deacylase with broad substrate specificity. By recycling D-aminoacyl-tRNA to D-amino acids and free tRNA molecules, this enzyme counteracts the toxicity associated with the formation of D-aminoacyl-tRNA entities in vivo. The sequence is that of D-aminoacyl-tRNA deacylase from Methanosarcina barkeri (strain Fusaro / DSM 804).